The primary structure comprises 153 residues: MSQKSVCVTYLLWLFFGLFGIHRFYLNRPCSGVLYLFTCGCFFIGWFIDICLIPGMVEDYNAKYDSMNKTTTTVTQVVVQPVYQGSPQQQPYGAPPQQPYGAPPQQPYGAPPQQPYGAPPQQPYGAPPPQPYGAPPPGAYAPQGNYPPPYGPQ.

A TM2 domain is found at 3-50 (QKSVCVTYLLWLFFGLFGIHRFYLNRPCSGVLYLFTCGCFFIGWFIDI). 2 helical membrane passes run 6 to 26 (VCVT…RFYL) and 33 to 53 (VLYL…ICLI). Residues 85 to 153 (GSPQQQPYGA…GNYPPPYGPQ (69 aa)) form a disordered region. Repeat copies occupy residues 89–96 (QQPYGAPP), 97–104 (QQPYGAPP), 105–112 (QQPYGAPP), 113–120 (QQPYGAPP), 121–128 (QQPYGAPP), and 129–136 (PQPYGAPP). Residues 89 to 136 (QQPYGAPPQQPYGAPPQQPYGAPPQQPYGAPPQQPYGAPPPQPYGAPP) are 6 X 8 AA tandem repeat of Q-Q-P-Y-G-A-P-P. Residues 93–153 (GAPPQQPYGA…GNYPPPYGPQ (61 aa)) are compositionally biased toward pro residues.

Belongs to the TM2 family.

The protein localises to the membrane. This Dictyostelium discoideum (Social amoeba) protein is TM2 domain-containing protein DDB_G0277895.